The sequence spans 206 residues: MPDAVQAPYPAYRPEPNMQTITIAPPKRSWFSLLSWAVVLAVLVVSWQGAEMAPLTLIKDGGNMATFAADFFPPDFSQWQDYLTEMAVTLQIAVWGTALAVVLSIPFGLMSAENLVPWWVYQPVRRLMDACRAINEMVFAMLFVVAVGLGPFAGVLACWRCLSTPPACSPSCFPKRWKRLSPARWKAFAPPVPTSSKRSSTACCHR.

Helical transmembrane passes span 30–50 (WFSL…WQGA), 92–112 (IAVW…LMSA), and 137–157 (MVFA…GVLA).

If the reading frame is restored, the complex is composed of two ATP-binding proteins (PhnC), two transmembrane proteins (PhnE) and a solute-binding protein (PhnD).

It is found in the cell inner membrane. N-terminal fragment of the PhnE protein, part of a phosphonate usage operon that is cryptic in K12 strains. Growth of K12 strains on phosphonate can be observed when it is used as the sole phosphorus source after a 60 hour lag period, suggesting the operon is activated. An intact PhnE in strain B is (AC A0A140NFA3). Part of the binding-protein-dependent transport system for phosphonates; probably responsible for the translocation of the substrate across the membrane. In Escherichia coli (strain K12), this protein is Putative cryptic phosphonate transport system permease protein PhnE1 (phnE1).